The primary structure comprises 118 residues: Large ribosomal subunit protein bL19 (118 aa).

It belongs to the bacterial ribosomal protein bL19 family.

This protein is located at the 30S-50S ribosomal subunit interface and may play a role in the structure and function of the aminoacyl-tRNA binding site. This Herpetosiphon aurantiacus (strain ATCC 23779 / DSM 785 / 114-95) protein is Large ribosomal subunit protein bL19.